Consider the following 368-residue polypeptide: MITLQVDLGERSYPIHIGTGLLGNAELLRPHVRGQHAVIVTNETVGPLYAARVEASLKELGKTVRVVTLPDGEAFKQWETLNLIFDALLSAGADRKTTLVALGGGVVGDMTGFAAACYMRGVPFVQVPTTLLSQVDSSVGGKTGINHPLGKNMIGAFHQPNAVIADIDTLRTLPARELAAGMAEVIKHGAIADADYFAWIERNIAALNSCDPDLMALAVQRSCEIKAGVVAQDEREGGLRAILNFGHTFGHAIEAGMGYGEWLHGEAVGCGMVMAADLSHRLGFIDTETRARIRQLTQAAMLPIVAPELGTDRYIELMKVDKKAEAGSIKFILLKKLGEAFITTVPDTDLRATLAQAVLKPPTEATVA.

NAD(+)-binding positions include 71 to 76, 105 to 109, 129 to 130, K142, K151, and 169 to 172; these read DGEAFK, GVVGD, TT, and TLRT. Zn(2+) is bound by residues E184, H247, and H264.

The protein belongs to the sugar phosphate cyclases superfamily. Dehydroquinate synthase family. It depends on Co(2+) as a cofactor. Requires Zn(2+) as cofactor. NAD(+) serves as cofactor.

It localises to the cytoplasm. The catalysed reaction is 7-phospho-2-dehydro-3-deoxy-D-arabino-heptonate = 3-dehydroquinate + phosphate. It functions in the pathway metabolic intermediate biosynthesis; chorismate biosynthesis; chorismate from D-erythrose 4-phosphate and phosphoenolpyruvate: step 2/7. Functionally, catalyzes the conversion of 3-deoxy-D-arabino-heptulosonate 7-phosphate (DAHP) to dehydroquinate (DHQ). This chain is 3-dehydroquinate synthase, found in Cupriavidus pinatubonensis (strain JMP 134 / LMG 1197) (Cupriavidus necator (strain JMP 134)).